A 589-amino-acid polypeptide reads, in one-letter code: Transmembrane 9 superfamily member 5 (589 aa).

A signal peptide spans methionine 1 to glycine 24. At serine 25 to histidine 227 the chain is on the lumenal side. A helical membrane pass occupies residues phenylalanine 228 to leucine 248. Residues phenylalanine 249–cysteine 291 are Cytoplasmic-facing. Residues alanine 292 to phenylalanine 312 traverse the membrane as a helical segment. The Lumenal segment spans residues threonine 313–arginine 321. The helical transmembrane segment at glycine 322 to threonine 342 threads the bilayer. Residues serine 343 to leucine 361 are Cytoplasmic-facing. A helical transmembrane segment spans residues alanine 362–isoleucine 382. Residues threonine 383–threonine 394 lie on the Lumenal side of the membrane. A helical membrane pass occupies residues isoleucine 395–valine 415. The Cytoplasmic portion of the chain corresponds to leucine 416–glutamine 450. A helical transmembrane segment spans residues valine 451–alanine 471. Residues serine 472–proline 482 lie on the Lumenal side of the membrane. The chain crosses the membrane as a helical span at residues glycine 483–leucine 503. Topologically, residues threonine 504–arginine 518 are cytoplasmic. A helical transmembrane segment spans residues serine 519 to leucine 539. Residues arginine 540 to serine 550 lie on the Lumenal side of the membrane. The chain crosses the membrane as a helical span at residues phenylalanine 551–serine 571. Topologically, residues phenylalanine 572–glutamate 589 are cytoplasmic. An Endoplasmic reticulum export signal motif is present at residues phenylalanine 578 to tyrosine 583. Positions lysine 587–glutamate 589 match the Golgi retention signal motif.

This sequence belongs to the nonaspanin (TM9SF) (TC 9.A.2) family. As to expression, expressed in the root cap and in giant cells.

Its subcellular location is the endosome membrane. The protein localises to the golgi apparatus membrane. In Arabidopsis thaliana (Mouse-ear cress), this protein is Transmembrane 9 superfamily member 5.